A 514-amino-acid polypeptide reads, in one-letter code: 2,3-bisphosphoglycerate-independent phosphoglycerate mutase (514 aa).

Residues Asp15 and Ser65 each contribute to the Mn(2+) site. Ser65 acts as the Phosphoserine intermediate in catalysis. Substrate-binding positions include His126, 156–157, Arg188, Arg194, 261–264, and Lys335; these read RD and RADR. Residues Asp403, His407, Asp444, His445, and His462 each coordinate Mn(2+).

This sequence belongs to the BPG-independent phosphoglycerate mutase family. As to quaternary structure, monomer. Mn(2+) is required as a cofactor.

It carries out the reaction (2R)-2-phosphoglycerate = (2R)-3-phosphoglycerate. It participates in carbohydrate degradation; glycolysis; pyruvate from D-glyceraldehyde 3-phosphate: step 3/5. In terms of biological role, catalyzes the interconversion of 2-phosphoglycerate and 3-phosphoglycerate. The protein is 2,3-bisphosphoglycerate-independent phosphoglycerate mutase of Syntrophotalea carbinolica (strain DSM 2380 / NBRC 103641 / GraBd1) (Pelobacter carbinolicus).